The chain runs to 382 residues: Bifunctional enzyme IspD/IspF (382 aa).

The segment at 1–225 is 2-C-methyl-D-erythritol 4-phosphate cytidylyltransferase; the sequence is MTFSVVIVAA…EHLAGVARVT (225 aa). A 2-C-methyl-D-erythritol 2,4-cyclodiphosphate synthase region spans residues 226-382; sequence RVGQGFDAHR…SAVVAVETPA (157 aa). 2 residues coordinate a divalent metal cation: D232 and H234. Residues 232–234 and 258–259 contribute to the 4-CDP-2-C-methyl-D-erythritol 2-phosphate site; these read DAH and HS. H266 contacts a divalent metal cation. Residues 280-282, 356-359, F363, and R366 contribute to the 4-CDP-2-C-methyl-D-erythritol 2-phosphate site; these read DIG and TTTE.

It in the N-terminal section; belongs to the IspD/TarI cytidylyltransferase family. IspD subfamily. This sequence in the C-terminal section; belongs to the IspF family. It depends on a divalent metal cation as a cofactor.

It catalyses the reaction 2-C-methyl-D-erythritol 4-phosphate + CTP + H(+) = 4-CDP-2-C-methyl-D-erythritol + diphosphate. The enzyme catalyses 4-CDP-2-C-methyl-D-erythritol 2-phosphate = 2-C-methyl-D-erythritol 2,4-cyclic diphosphate + CMP. It functions in the pathway isoprenoid biosynthesis; isopentenyl diphosphate biosynthesis via DXP pathway; isopentenyl diphosphate from 1-deoxy-D-xylulose 5-phosphate: step 2/6. The protein operates within isoprenoid biosynthesis; isopentenyl diphosphate biosynthesis via DXP pathway; isopentenyl diphosphate from 1-deoxy-D-xylulose 5-phosphate: step 4/6. Functionally, bifunctional enzyme that catalyzes the formation of 4-diphosphocytidyl-2-C-methyl-D-erythritol from CTP and 2-C-methyl-D-erythritol 4-phosphate (MEP) (IspD), and catalyzes the conversion of 4-diphosphocytidyl-2-C-methyl-D-erythritol 2-phosphate (CDP-ME2P) to 2-C-methyl-D-erythritol 2,4-cyclodiphosphate (ME-CPP) with a corresponding release of cytidine 5-monophosphate (CMP) (IspF). The protein is Bifunctional enzyme IspD/IspF of Caulobacter vibrioides (strain ATCC 19089 / CIP 103742 / CB 15) (Caulobacter crescentus).